Here is a 409-residue protein sequence, read N- to C-terminus: MQTVKALRRVSEPLQWVRSVSYGRRFSALPNYSASDADFEDQVLVEGKAKSRAAILNNPSSLNALSAPMVGRLKRLYESWEENPAISFVLMKGSGKTFCSGADVLSLYHSINEGNTEESKLFFENLYKFVYLQGTYLKPNIAIMDGVTMGCGGGISLPGMFRVATDKTVLAHPEVQIGFHPDAGASYYLSRLPGYLGEYLALTGQKLNGVEMIACGLATHYCLNARLPLIEERIGKLLTDDPAVIEDSLAQYGDLVYPDSSSVLHKIELIDKYFGLDTVEEIIEAMENEAANSCNEWCKKTLKQIKEASPLSLKITLQSIREGRFQTLDQCLTHEYRISICGVSKVVSGDFCEGIRARLVDKDFAPKWDPPRLEDVSKDMVDCYFTPASELDDSDSELKLPTAQREPYF.

Residues 1-26 constitute a mitochondrion transit peptide; sequence MQTVKALRRVSEPLQWVRSVSYGRRF. The interval 388 to 409 is disordered; sequence ASELDDSDSELKLPTAQREPYF.

The protein belongs to the enoyl-CoA hydratase/isomerase family. Mitochondrion-specific ribosomal protein mS47 subfamily. As to quaternary structure, component of the mitochondrial ribosome small subunit.

The protein resides in the mitochondrion. The sequence is that of Small ribosomal subunit protein mS47 from Arabidopsis thaliana (Mouse-ear cress).